The primary structure comprises 276 residues: 4-deoxy-L-threo-5-hexosulose-uronate ketol-isomerase (276 aa).

Zn(2+) contacts are provided by H194, H196, E201, and H243.

This sequence belongs to the KduI family. Zn(2+) serves as cofactor.

The catalysed reaction is 5-dehydro-4-deoxy-D-glucuronate = 3-deoxy-D-glycero-2,5-hexodiulosonate. Its pathway is glycan metabolism; pectin degradation; 2-dehydro-3-deoxy-D-gluconate from pectin: step 4/5. Its function is as follows. Catalyzes the isomerization of 5-dehydro-4-deoxy-D-glucuronate to 3-deoxy-D-glycero-2,5-hexodiulosonate. The sequence is that of 4-deoxy-L-threo-5-hexosulose-uronate ketol-isomerase from Lachnoclostridium phytofermentans (strain ATCC 700394 / DSM 18823 / ISDg) (Clostridium phytofermentans).